The chain runs to 504 residues: 26S proteasome non-ATPase regulatory subunit 3 (504 aa).

The 181-residue stretch at 254–434 (ARYFYYQGRI…GYLQSRENID (181 aa)) folds into the PCI domain. A disordered region spans residues 485 to 504 (KEEMERQAEESSDNEGDSDF). Over residues 494-504 (ESSDNEGDSDF) the composition is skewed to acidic residues.

The protein belongs to the proteasome subunit S3 family. In terms of assembly, the 26S proteasome is composed of a core protease, known as the 20S proteasome, capped at one or both ends by the 19S regulatory complex (RC). The RC is composed of at least 18 different subunits in two subcomplexes, the base and the lid, which form the portions proximal and distal to the 20S proteolytic core, respectively.

In terms of biological role, acts as a regulatory subunit of the 26 proteasome which is involved in the ATP-dependent degradation of ubiquitinated proteins. The sequence is that of 26S proteasome non-ATPase regulatory subunit 3 (psmD3) from Dictyostelium discoideum (Social amoeba).